A 137-amino-acid polypeptide reads, in one-letter code: Putative pre-16S rRNA nuclease (137 aa).

It belongs to the YqgF nuclease family.

It localises to the cytoplasm. Functionally, could be a nuclease involved in processing of the 5'-end of pre-16S rRNA. This is Putative pre-16S rRNA nuclease from Clostridium botulinum (strain Eklund 17B / Type B).